A 444-amino-acid chain; its full sequence is Glycogen synthase (444 aa).

Arg15 provides a ligand contact to ADP-alpha-D-glucose.

This sequence belongs to the glycosyltransferase 1 family. Bacterial/plant glycogen synthase subfamily.

It catalyses the reaction [(1-&gt;4)-alpha-D-glucosyl](n) + ADP-alpha-D-glucose = [(1-&gt;4)-alpha-D-glucosyl](n+1) + ADP + H(+). It participates in glycan biosynthesis; glycogen biosynthesis. Its function is as follows. Synthesizes alpha-1,4-glucan chains using ADP-glucose. The sequence is that of Glycogen synthase from Deinococcus radiodurans (strain ATCC 13939 / DSM 20539 / JCM 16871 / CCUG 27074 / LMG 4051 / NBRC 15346 / NCIMB 9279 / VKM B-1422 / R1).